Consider the following 138-residue polypeptide: Large ribosomal subunit protein bL17 (138 aa).

The protein belongs to the bacterial ribosomal protein bL17 family. In terms of assembly, part of the 50S ribosomal subunit. Contacts protein L32.

In Methylorubrum extorquens (strain PA1) (Methylobacterium extorquens), this protein is Large ribosomal subunit protein bL17.